Reading from the N-terminus, the 1553-residue chain is Probable serine/threonine-protein kinase qkgA (1553 aa).

The disordered stretch occupies residues Ser-113–His-142. 4 LRR repeats span residues Asn-287–Cys-309, Gln-311–Lys-333, Phe-334–Thr-356, and Leu-357–Leu-378. The region spanning Ser-395–Ser-619 is the Roc domain. Disordered stretches follow at residues Asn-643–Gln-696, Ile-955–Gln-1019, and Asn-1048–Lys-1090. Low complexity-rich tracts occupy residues Ser-648–Lys-675, Ser-683–Gln-696, Ser-956–Ser-1018, and Thr-1059–Lys-1090. Residues Gln-694–Leu-893 enclose the COR domain. In terms of domain architecture, Protein kinase spans Ile-1242–Leu-1546. ATP-binding positions include Ile-1248 to Ile-1256 and Lys-1271. The active-site Proton acceptor is Asp-1393.

Belongs to the protein kinase superfamily. TKL Ser/Thr protein kinase family. ROCO subfamily.

The catalysed reaction is L-seryl-[protein] + ATP = O-phospho-L-seryl-[protein] + ADP + H(+). It carries out the reaction L-threonyl-[protein] + ATP = O-phospho-L-threonyl-[protein] + ADP + H(+). Involved in growth, and during development, in aggregation. This chain is Probable serine/threonine-protein kinase qkgA (qkgA-1), found in Dictyostelium discoideum (Social amoeba).